A 101-amino-acid polypeptide reads, in one-letter code: Small ribosomal subunit protein bS18c (101 aa).

A disordered region spans residues Lys82–Lys101.

This sequence belongs to the bacterial ribosomal protein bS18 family. As to quaternary structure, part of the 30S ribosomal subunit.

The protein localises to the plastid. The protein resides in the chloroplast. The protein is Small ribosomal subunit protein bS18c of Platanus occidentalis (Sycamore).